We begin with the raw amino-acid sequence, 287 residues long: Endolytic peptidoglycan transglycosylase RlpA (287 aa).

The first 25 residues, 1–25, serve as a signal peptide directing secretion; it reads MKLKTGLNLTALLLFMISVAFPAQA. The 76-residue stretch at 209–284 folds into the SPOR domain; the sequence is LKGTEFYCLK…ANNKPLIVYT (76 aa).

It belongs to the RlpA family.

Its function is as follows. Lytic transglycosylase with a strong preference for naked glycan strands that lack stem peptides. This is Endolytic peptidoglycan transglycosylase RlpA from Haemophilus influenzae (strain ATCC 51907 / DSM 11121 / KW20 / Rd).